The following is a 389-amino-acid chain: uncharacterized protein (389 aa).

The protein belongs to the mimivirus L17x/L18x family.

This is an uncharacterized protein from Acanthamoeba polyphaga mimivirus (APMV).